The primary structure comprises 130 residues: Small ribosomal subunit protein uS8 (130 aa).

It belongs to the universal ribosomal protein uS8 family. As to quaternary structure, part of the 30S ribosomal subunit.

Its function is as follows. One of the primary rRNA binding proteins, it binds directly to 16S rRNA central domain where it helps coordinate assembly of the platform of the 30S subunit. This Thermococcus onnurineus (strain NA1) protein is Small ribosomal subunit protein uS8.